Reading from the N-terminus, the 518-residue chain is Dihydropyrimidinase 2 (518 aa).

His-59, His-61, and Lys-152 together coordinate Zn(2+). Lys-152 is modified (N6-carboxylysine). Residue Tyr-157 participates in substrate binding. 2 residues coordinate Zn(2+): His-185 and His-241. Ser-291 lines the substrate pocket. Asp-319 is a Zn(2+) binding site. A substrate-binding site is contributed by Asn-340.

Belongs to the metallo-dependent hydrolases superfamily. Hydantoinase/dihydropyrimidinase family. Homotetramer. The cofactor is Zn(2+). Post-translationally, carboxylation allows a single lysine to coordinate two zinc ions.

It carries out the reaction 5,6-dihydrouracil + H2O = 3-(carbamoylamino)propanoate + H(+). This Caenorhabditis briggsae protein is Dihydropyrimidinase 2 (dhp-2).